The following is a 419-amino-acid chain: L-rhamnose isomerase (419 aa).

Mn(2+) contacts are provided by His262, Asp294, and Asp296.

This sequence belongs to the rhamnose isomerase family. In terms of assembly, homotetramer. Requires Mn(2+) as cofactor.

The protein resides in the cytoplasm. The enzyme catalyses L-rhamnopyranose = L-rhamnulose. It participates in carbohydrate degradation; L-rhamnose degradation; glycerone phosphate from L-rhamnose: step 1/3. Its function is as follows. Catalyzes the interconversion of L-rhamnose and L-rhamnulose. The sequence is that of L-rhamnose isomerase from Escherichia coli O127:H6 (strain E2348/69 / EPEC).